Here is a 725-residue protein sequence, read N- to C-terminus: Ribonuclease Y (725 aa).

A helical transmembrane segment spans residues V4 to A24. 3 disordered regions span residues D62–T140, V165–R195, and E300–E321. Low complexity-rich tracts occupy residues D84–G100 and A114–A137. The region spanning V415–D481 is the KH domain. In terms of domain architecture, HD spans V541–G634.

This sequence belongs to the RNase Y family.

It localises to the cell membrane. Functionally, endoribonuclease that initiates mRNA decay. The polypeptide is Ribonuclease Y (Frankia alni (strain DSM 45986 / CECT 9034 / ACN14a)).